Consider the following 539-residue polypeptide: Protein peanut (539 aa).

Phosphoserine is present on residues S6 and S13. The segment at 29-90 (LRDKQQAASA…GASNGDSNKL (62 aa)) is disordered. Residues 35 to 54 (AASASASSATNGSSGSESLV) are compositionally biased toward low complexity. One can recognise a Septin-type G domain in the interval 139–411 (RGFEFTLMVV…ENYRCRKLSE (273 aa)). The segment at 149 to 156 (GASGLGKS) is G1 motif. Residues 149–156 (GASGLGKS), T183, G209, 288–296 (KADTMTPDE), G345, and R360 contribute to the GTP site. Residues 206–209 (DTPG) are G3 motif. Residues 287–290 (AKAD) form a G4 motif region. Residues 420 to 516 (RLSNKNPLTQ…HVTLEELKRR (97 aa)) adopt a coiled-coil conformation. The tract at residues 513–539 (LKRRSLGANSSTDNVDGKKEKKKKGLF) is disordered. S517 is modified (phosphoserine).

This sequence belongs to the TRAFAC class TrmE-Era-EngA-EngB-Septin-like GTPase superfamily. Septin GTPase family. In terms of assembly, likely part of a multicomponent septin complex that includes Septin1. Interacts with Septin1. Interacts with hil. Interacts with park. Post-translationally, ubiquitinated by park, leading to its degradation by the proteasome. Accumulates at the leading edge of the cleavage furrow in dividing cells and cellularizing embryos (at protein level).

It localises to the apical cell membrane. The protein resides in the cleavage furrow. The protein localises to the cytoplasm. It is found in the cell cortex. Functionally, involved in cytokinesis and possibly cellularization. Also acts as an enhancer of the sina gene, thus having a role in photoreceptor development. May be involved in p53-dependent apoptosis. The protein is Protein peanut (pnut) of Drosophila melanogaster (Fruit fly).